The primary structure comprises 299 residues: Pyridoxal 5'-phosphate synthase subunit PdxS (299 aa).

Aspartate 29 contacts D-ribose 5-phosphate. The Schiff-base intermediate with D-ribose 5-phosphate role is filled by lysine 86. Residue glycine 158 coordinates D-ribose 5-phosphate. Arginine 170 contributes to the D-glyceraldehyde 3-phosphate binding site. Residues glycine 219 and 240–241 (GS) contribute to the D-ribose 5-phosphate site.

The protein belongs to the PdxS/SNZ family. In terms of assembly, in the presence of PdxT, forms a dodecamer of heterodimers.

The catalysed reaction is aldehydo-D-ribose 5-phosphate + D-glyceraldehyde 3-phosphate + L-glutamine = pyridoxal 5'-phosphate + L-glutamate + phosphate + 3 H2O + H(+). It participates in cofactor biosynthesis; pyridoxal 5'-phosphate biosynthesis. Catalyzes the formation of pyridoxal 5'-phosphate from ribose 5-phosphate (RBP), glyceraldehyde 3-phosphate (G3P) and ammonia. The ammonia is provided by the PdxT subunit. Can also use ribulose 5-phosphate and dihydroxyacetone phosphate as substrates, resulting from enzyme-catalyzed isomerization of RBP and G3P, respectively. The sequence is that of Pyridoxal 5'-phosphate synthase subunit PdxS from Protochlamydia amoebophila (strain UWE25).